The following is a 377-amino-acid chain: Nitric oxide reductase FlRd-NAD(+) reductase (377 aa).

This sequence belongs to the FAD-dependent oxidoreductase family. FAD serves as cofactor.

It localises to the cytoplasm. The catalysed reaction is 2 reduced [nitric oxide reductase rubredoxin domain] + NAD(+) + H(+) = 2 oxidized [nitric oxide reductase rubredoxin domain] + NADH. It functions in the pathway nitrogen metabolism; nitric oxide reduction. Its function is as follows. One of at least two accessory proteins for anaerobic nitric oxide (NO) reductase. Reduces the rubredoxin moiety of NO reductase. The chain is Nitric oxide reductase FlRd-NAD(+) reductase from Salmonella agona (strain SL483).